The chain runs to 91 residues: Sec-independent protein translocase protein TatA (91 aa).

Residues 3–23 (FFGIGLPEMLVILAIALLVFG) form a helical membrane-spanning segment. The disordered stretch occupies residues 57-91 (DRTPATPAEATVEPPVLDSAPTEAVTVEKQTETQV). A compositionally biased stretch (low complexity) spans 59-72 (TPATPAEATVEPPV).

This sequence belongs to the TatA/E family. In terms of assembly, forms a complex with TatC.

The protein localises to the cell inner membrane. Part of the twin-arginine translocation (Tat) system that transports large folded proteins containing a characteristic twin-arginine motif in their signal peptide across membranes. TatA could form the protein-conducting channel of the Tat system. The chain is Sec-independent protein translocase protein TatA from Synechococcus elongatus (strain ATCC 33912 / PCC 7942 / FACHB-805) (Anacystis nidulans R2).